The following is a 223-amino-acid chain: Probable Ras-related protein Rab-4A (223 aa).

Gly-16–Thr-23 contributes to the GTP binding site. Positions Thr-38–Phe-46 match the Effector region motif. GTP contacts are provided by residues Asp-64–Gln-68 and Asn-122–Asp-125. S-geranylgeranyl cysteine attachment occurs at residues Cys-221 and Cys-223. Cys-223 bears the Cysteine methyl ester mark.

This sequence belongs to the small GTPase superfamily. Rab family.

Its subcellular location is the cell membrane. Protein transport. Probably involved in vesicular traffic. The polypeptide is Probable Ras-related protein Rab-4A (Echinococcus multilocularis (Fox tapeworm)).